Consider the following 679-residue polypeptide: Glycine--tRNA ligase beta subunit (679 aa).

The protein belongs to the class-II aminoacyl-tRNA synthetase family. In terms of assembly, tetramer of two alpha and two beta subunits.

The protein localises to the cytoplasm. The catalysed reaction is tRNA(Gly) + glycine + ATP = glycyl-tRNA(Gly) + AMP + diphosphate. In Streptococcus pyogenes serotype M18 (strain MGAS8232), this protein is Glycine--tRNA ligase beta subunit.